A 456-amino-acid polypeptide reads, in one-letter code: Alcohol acyltransferase 1 (456 aa).

Catalysis depends on proton acceptor residues His166 and Asp382.

It belongs to the plant acyltransferase family. Expressed in fruit.

It carries out the reaction 3-(methylsulfanyl)propanoyl-CoA + butan-1-ol = butyl 3-(methylsulfanyl)propanoate + CoA. The catalysed reaction is ethanol + benzoyl-CoA = ethyl benzoate + CoA. The enzyme catalyses butan-1-ol + benzoyl-CoA = butyl benzoate + CoA. It catalyses the reaction 2-(methylsulfanyl)acetyl-CoA + butan-1-ol = butyl 2-(methylsulfanyl)acetate + CoA. Functionally, involved in the biosynthesis of volatile esters which confer kiwifruit flavor. Alcohol acyl transferase that can use a wide range of alcohols as substrate to produce esters. Exhibits benzoyl-CoA:alcohol O-acyltransferase activity. The sequence is that of Alcohol acyltransferase 1 from Actinidia deliciosa (Kiwi).